A 536-amino-acid chain; its full sequence is MALTSFLPAPTQLSQDQLEAEEKARSQRSRQTSLVSSRREPPPYGYRKGWIPRLLEDFGDGGAFPEIHVAQYPLDMGRKKKMSNALAIQVDSEGKIKYDAIARQGQSKDKVIYSKYTDLVPKEVMNADDPDLQRPDEEAIKEITEKTRVALEKSVSQKVAAAMPVRAADKLAPAQYIRYTPSQQGVAFNSGAKQRVIRMVEMQKDPMEPPRFKINKKIPRGPPSPPAPVMHSPSRKMTVKEQQEWKIPPCISNWKNAKGYTIPLDKRLAADGRGLQTVHINENFAKLAEALYIADRKAREAVEMRAQVERKMAQKEKEKHEEKLREMAQKARERRAGIKTHVEKEDGEARERDEIRHDRRKERQHDRNLSRAAPDKRSKLQRNENRDISEVIALGVPNPRTSNEVQYDQRLFNQSKGMDSGFAGGEDEIYNVYDQAWRGGKDMAQSIYRPSKNLDKDMYGDDLEARIKTNRFVPDKEFSGSDRRQRGREGPVQFEEDPFGLDKFLEEAKQHGGSKRPSDSSRPKEHEHEGKKRRKE.

A disordered region spans residues 1–46 (MALTSFLPAPTQLSQDQLEAEEKARSQRSRQTSLVSSRREPPPYGY). N-acetylalanine is present on A2. S14 is subject to Phosphoserine. K23 is covalently cross-linked (Glycyl lysine isopeptide (Lys-Gly) (interchain with G-Cter in SUMO2)). The tract at residues 59-79 (GDGGAFPEIHVAQYPLDMGRK) is interaction with PPIL1. Glycyl lysine isopeptide (Lys-Gly) (interchain with G-Cter in SUMO2) cross-links involve residues K81, K97, K115, K122, K141, K158, and K170. Positions 174–339 (AQYIRYTPSQ…KARERRAGIK (166 aa)) are SNW. Residues S182 and S190 each carry the phosphoserine modification. Residue K193 forms a Glycyl lysine isopeptide (Lys-Gly) (interchain with G-Cter in SUMO2) linkage. The interval 209-233 (PPRFKINKKIPRGPPSPPAPVMHSP) is disordered. A phosphoserine mark is found at S224, S232, and S234. Glycyl lysine isopeptide (Lys-Gly) (interchain with G-Cter in SUMO2) cross-links involve residues K240, K258, K286, K339, K344, K416, and K441. Residues 311-386 (KMAQKEKEKH…RSKLQRNENR (76 aa)) are disordered. Position 446 is a phosphoserine (S446). K452 is covalently cross-linked (Glycyl lysine isopeptide (Lys-Gly) (interchain with G-Cter in SUMO2)). 2 stretches are compositionally biased toward basic and acidic residues: residues 470 to 489 (NRFV…RGRE) and 503 to 530 (KFLE…EHEG). A disordered region spans residues 470–536 (NRFVPDKEFS…EHEGKKRRKE (67 aa)). 2 positions are modified to phosphoserine: S479 and S481. A Glycyl lysine isopeptide (Lys-Gly) (interchain with G-Cter in SUMO2) cross-link involves residue K509.

This sequence belongs to the SNW family. As to quaternary structure, identified in the spliceosome C complex. Associates with U4/U6-U5 tri-small nuclear ribonucleoproteins (U4/U6-U5 tri-snRNPs). Component of the minor spliceosome, which splices U12-type introns. Interacts with SKI, SMAD2,SMAD3, RBPJ, RB1, PABPN1, MAGEA1, SIRT1, FOXN3, U2AF2, DAXX and ATP1B4. Interacts with PPIL1. Interacts with VDR and RXRA; preferentially associates with VDR:RXRA heterodimers. Interacts with NCOR2. Interacts with MAML1. Interacts with NOTCH1 NICD; the interaction involves multimerized NOTCH1 NICD. Forms a complex with NOTCH1 NICD and MAML1; the association is dissociated by RBPJ. Associates with positive transcription elongation factor b (P-TEFb). Component of the SNARP complex which consists at least of SNIP1, SNW1, THRAP3, BCLAF1 and PNN. In terms of assembly, (Microbial infection) Interacts with human papillomavirus type-16 (HPV16) E7 protein. (Microbial infection) Interacts with EBV EBNA2; EBNA2 competes with NCOR2 for interaction with SNW1.

The protein resides in the nucleus. Functionally, involved in pre-mRNA splicing as component of the spliceosome. As a component of the minor spliceosome, involved in the splicing of U12-type introns in pre-mRNAs. Required for the specific splicing of CDKN1A pre-mRNA; the function probably involves the recruitment of U2AF2 to the mRNA. May recruit PPIL1 to the spliceosome. May be involved in cyclin-D1/CCND1 mRNA stability through the SNARP complex which associates with both the 3'end of the CCND1 gene and its mRNA. Involved in transcriptional regulation. Modulates TGF-beta-mediated transcription via association with SMAD proteins, MYOD1-mediated transcription via association with PABPN1, RB1-mediated transcriptional repression, and retinoid-X receptor (RXR)- and vitamin D receptor (VDR)-dependent gene transcription in a cell line-specific manner probably involving coactivators NCOA1 and GRIP1. Is involved in NOTCH1-mediated transcriptional activation. Binds to multimerized forms of Notch intracellular domain (NICD) and is proposed to recruit transcriptional coactivators such as MAML1 to form an intermediate preactivation complex which associates with DNA-bound CBF-1/RBPJ to form a transcriptional activation complex by releasing SNW1 and redundant NOTCH1 NICD. (Microbial infection) Is recruited by HIV-1 Tat to Tat:P-TEFb:TAR RNA complexes and is involved in Tat transcription by recruitment of MYC, MEN1 and TRRAP to the HIV promoter. In terms of biological role, (Microbial infection) Proposed to be involved in transcriptional activation by EBV EBNA2 of CBF-1/RBPJ-repressed promoters. The sequence is that of SNW domain-containing protein 1 (SNW1) from Homo sapiens (Human).